The primary structure comprises 266 residues: 4-hydroxy-tetrahydrodipicolinate reductase (266 aa).

10-15 (GPRGRM) provides a ligand contact to NAD(+). Lysine 38 contacts NADP(+). NAD(+) is bound by residues 99-101 (GTT) and 125-128 (APNF). Histidine 155 functions as the Proton donor/acceptor in the catalytic mechanism. A (S)-2,3,4,5-tetrahydrodipicolinate-binding site is contributed by histidine 156. Lysine 159 functions as the Proton donor in the catalytic mechanism. Residue 165 to 166 (GT) coordinates (S)-2,3,4,5-tetrahydrodipicolinate.

The protein belongs to the DapB family.

It localises to the cytoplasm. It carries out the reaction (S)-2,3,4,5-tetrahydrodipicolinate + NAD(+) + H2O = (2S,4S)-4-hydroxy-2,3,4,5-tetrahydrodipicolinate + NADH + H(+). It catalyses the reaction (S)-2,3,4,5-tetrahydrodipicolinate + NADP(+) + H2O = (2S,4S)-4-hydroxy-2,3,4,5-tetrahydrodipicolinate + NADPH + H(+). The protein operates within amino-acid biosynthesis; L-lysine biosynthesis via DAP pathway; (S)-tetrahydrodipicolinate from L-aspartate: step 4/4. Functionally, catalyzes the conversion of 4-hydroxy-tetrahydrodipicolinate (HTPA) to tetrahydrodipicolinate. This chain is 4-hydroxy-tetrahydrodipicolinate reductase, found in Bacillus cereus (strain Q1).